We begin with the raw amino-acid sequence, 541 residues long: MGQCCTGGGKAVAGDEAEPGTSKAAPPSRGTSSKNGSAKQQPCSPAAKAAATEAAAAASSSKKPAGPIGEVLERPMEEVRTTYSIGKELGRGQFGVTHLCTHKATGEKLACKTIAKRKLANKEDVDDVRREVQIMHHLSGQPNIVDLRGAYEDKHNVHLVMELCAGGELFDRIIARGHYTERAAAALLRAIVGIVHTCHSMGVIHRDLKPENFLLLSKGDDAPLKATDFGLSVFFKEGEVFRDIVGSAYYIAPEVLKRKYGPEADIWSIGVMLYIFLAGVPPFWAESENAIFTAILRGQIDLASEPWPKISSGAKDLVRKMLNINPKERLTAFQVLNHPWIKEDGDAPDVPLDNVVLNRLKQFRAMNQFKKAALRIIAGCLSEEEIKGLKEMFKNIDKDNSGTITLEELKNGLAKQGTKFSDNEIEQLMEAADADGNGIIDYEEFVTATVHMNKMDREEHLYTAFQYFDKDNSGYITKEELEQALKEQGLYDANEIKDVITDADSNNDGRIDYSEFVAMMRKGSGCAEATNPKKKRRDLVL.

Gly residues predominate over residues 1 to 11; the sequence is MGQCCTGGGKA. The tract at residues 1–74 is disordered; it reads MGQCCTGGGK…AGPIGEVLER (74 aa). Gly-2 carries N-myristoyl glycine lipidation. A compositionally biased stretch (low complexity) spans 38-67; it reads AKQQPCSPAAKAAATEAAAAASSSKKPAGP. One can recognise a Protein kinase domain in the interval 83 to 341; it reads YSIGKELGRG…AFQVLNHPWI (259 aa). ATP contacts are provided by residues 89–97 and Lys-112; that span reads LGRGQFGVT. The active-site Proton acceptor is the Asp-207. An autoinhibitory domain region spans residues 347–377; sequence APDVPLDNVVLNRLKQFRAMNQFKKAALRII. EF-hand domains lie at 384 to 419, 420 to 455, 456 to 491, and 493 to 526; these read EEIK…QGTK, FSDN…MNKM, DREE…QGLY, and ANEI…GSGC. Residues Asp-397, Asp-399, Ser-401, Thr-403, Glu-408, Asp-433, Asp-435, Asn-437, Glu-444, Asp-469, Asp-471, Ser-473, Tyr-475, Glu-480, Asp-504, Asn-506, Asp-508, Arg-510, and Glu-515 each coordinate Ca(2+).

This sequence belongs to the protein kinase superfamily. Ser/Thr protein kinase family. CDPK subfamily. Specifically expressed in heading panicles, spikelets and mature pollen grains. Not expressed in vegetative tissues.

Its subcellular location is the membrane. The catalysed reaction is L-seryl-[protein] + ATP = O-phospho-L-seryl-[protein] + ADP + H(+). The enzyme catalyses L-threonyl-[protein] + ATP = O-phospho-L-threonyl-[protein] + ADP + H(+). Its activity is regulated as follows. Activated by calcium. Autophosphorylation may play an important role in the regulation of the kinase activity. May play a role in signal transduction pathways that involve calcium as a second messenger. The sequence is that of Calcium-dependent protein kinase 25 from Oryza sativa subsp. japonica (Rice).